Consider the following 340-residue polypeptide: tRNA N6-adenosine threonylcarbamoyltransferase (340 aa).

Fe cation-binding residues include H111 and H115. Substrate-binding positions include 133-137 (VVSGG), D166, G179, D183, and N272. Residue D300 coordinates Fe cation.

This sequence belongs to the KAE1 / TsaD family. Fe(2+) serves as cofactor.

Its subcellular location is the cytoplasm. It catalyses the reaction L-threonylcarbamoyladenylate + adenosine(37) in tRNA = N(6)-L-threonylcarbamoyladenosine(37) in tRNA + AMP + H(+). Its function is as follows. Required for the formation of a threonylcarbamoyl group on adenosine at position 37 (t(6)A37) in tRNAs that read codons beginning with adenine. Is involved in the transfer of the threonylcarbamoyl moiety of threonylcarbamoyl-AMP (TC-AMP) to the N6 group of A37, together with TsaE and TsaB. TsaD likely plays a direct catalytic role in this reaction. The polypeptide is tRNA N6-adenosine threonylcarbamoyltransferase (Geobacter sulfurreducens (strain ATCC 51573 / DSM 12127 / PCA)).